The chain runs to 319 residues: DNA-directed RNA polymerases IV and V subunit 3B (319 aa).

Met-1 bears the N-acetylmethionine mark.

It belongs to the archaeal Rpo3/eukaryotic RPB3 RNA polymerase subunit family. In terms of assembly, component of the RNA polymerase IV and V complexes. Interacts with NRPB11, SHH1, GRP23 and NRPD1.

It is found in the nucleus. In terms of biological role, DNA-dependent RNA polymerase catalyzes the transcription of DNA into RNA using the four ribonucleoside triphosphates as substrates. Component of RNA polymerases IV and V which mediate short-interfering RNAs (siRNA) accumulation and subsequent RNA-directed DNA methylation-dependent (RdDM) transcriptional gene silencing (TGS) of endogenous repeated sequences, including transposable elements. The protein is DNA-directed RNA polymerases IV and V subunit 3B (NRPD3B) of Arabidopsis thaliana (Mouse-ear cress).